A 782-amino-acid polypeptide reads, in one-letter code: Shutoff protein (782 aa).

The tract at residues 262–329 (VMNQLLIKRA…AVLVTVELEC (68 aa)) is binding to host EIF4G. One can recognise an RRM domain in the interval 332 to 450 (RFFSDITTLR…SLWTGFDERT (119 aa)). Phosphotyrosine; by host is present on residues tyrosine 349 and tyrosine 665. The disordered stretch occupies residues 715–760 (GGRILGESGRGRGRGLGRMGGGGGGQPRRGSRGGGGRFQGRSDRRQ). The span at 728–752 (RGLGRMGGGGGGQPRRGSRGGGGRF) shows a compositional bias: gly residues.

The protein belongs to the adenoviridae shutoff protein family. In terms of assembly, monomer. Interacts with hexon protein; this interaction allows chaperoning and trimerization of hexon proteins. Interacts (via N-terminus) with host initiation factor EIF4G (via C-terminus). Interacts (via RRM domain) with viral mRNAs that contain the tripartite leader; this interaction allows ribosome shunting and expression of viral late mRNAs. Might be cleaved by the viral protease. Post-translationally, phosphorylated. Tyrosine phosphorylation enhances preferential binding to tripartite leader mRNAs and allows ribosome shunting. In terms of processing, methylated. Asymmetric dimethylation by host PRMT1 of the Arg/Gly-rich region may regulate shutoff protein binding to hexon and promote the capsid assembly in the nucleus.

It localises to the host cytoplasm. In terms of biological role, protein that inhibits host translation while promoting late viral translation by ribosome shunting. Blocks host cap-dependent translation by binding to eIF4G, displacing MKNK1 from cap initiation complexes and preventing EIF4E phosphorylation. Binds to the tripartite leader sequence of viral late mRNAs and recruits host eIF4G, PABPC1/poly-A binding protein and 40S ribosomes subunits on viral mRNAs, allowing ribosome shunting and efficient translation of late viral mRNAs even though conventional translation via ribosome scanning from the cap has been shut off in the host cell. During assembly, acts as a chaperone protein that helps hexon proteins assembly into trimers. This Human adenovirus A serotype 12 (HAdV-12) protein is Shutoff protein.